Reading from the N-terminus, the 575-residue chain is Proline--tRNA ligase (575 aa).

This sequence belongs to the class-II aminoacyl-tRNA synthetase family. ProS type 1 subfamily. In terms of assembly, homodimer.

Its subcellular location is the cytoplasm. It catalyses the reaction tRNA(Pro) + L-proline + ATP = L-prolyl-tRNA(Pro) + AMP + diphosphate. Catalyzes the attachment of proline to tRNA(Pro) in a two-step reaction: proline is first activated by ATP to form Pro-AMP and then transferred to the acceptor end of tRNA(Pro). As ProRS can inadvertently accommodate and process non-cognate amino acids such as alanine and cysteine, to avoid such errors it has two additional distinct editing activities against alanine. One activity is designated as 'pretransfer' editing and involves the tRNA(Pro)-independent hydrolysis of activated Ala-AMP. The other activity is designated 'posttransfer' editing and involves deacylation of mischarged Ala-tRNA(Pro). The misacylated Cys-tRNA(Pro) is not edited by ProRS. This chain is Proline--tRNA ligase, found in Anaeromyxobacter sp. (strain Fw109-5).